The primary structure comprises 263 residues: 4-hydroxy-tetrahydrodipicolinate reductase (263 aa).

NAD(+) is bound by residues 8–13, D34, 99–101, and 125–128; these read GACGRM, GTT, and SPNY. The Proton donor/acceptor role is filled by H157. H158 provides a ligand contact to (S)-2,3,4,5-tetrahydrodipicolinate. Catalysis depends on K161, which acts as the Proton donor. 167–168 is a binding site for (S)-2,3,4,5-tetrahydrodipicolinate; it reads GT.

It belongs to the DapB family.

The protein resides in the cytoplasm. The catalysed reaction is (S)-2,3,4,5-tetrahydrodipicolinate + NAD(+) + H2O = (2S,4S)-4-hydroxy-2,3,4,5-tetrahydrodipicolinate + NADH + H(+). The enzyme catalyses (S)-2,3,4,5-tetrahydrodipicolinate + NADP(+) + H2O = (2S,4S)-4-hydroxy-2,3,4,5-tetrahydrodipicolinate + NADPH + H(+). Its pathway is amino-acid biosynthesis; L-lysine biosynthesis via DAP pathway; (S)-tetrahydrodipicolinate from L-aspartate: step 4/4. Catalyzes the conversion of 4-hydroxy-tetrahydrodipicolinate (HTPA) to tetrahydrodipicolinate. This is 4-hydroxy-tetrahydrodipicolinate reductase from Methanosarcina barkeri (strain Fusaro / DSM 804).